A 329-amino-acid polypeptide reads, in one-letter code: DNA-directed RNA polymerase subunit alpha (329 aa).

Residues 1–235 (MQGFVEDFLK…QQLEAFVDLR (235 aa)) form an alpha N-terminal domain (alpha-NTD) region. Positions 249-329 (FEPVLLRPVD…NWPPKSLLED (81 aa)) are alpha C-terminal domain (alpha-CTD).

This sequence belongs to the RNA polymerase alpha chain family. In terms of assembly, homodimer. The RNAP catalytic core consists of 2 alpha, 1 beta, 1 beta' and 1 omega subunit. When a sigma factor is associated with the core the holoenzyme is formed, which can initiate transcription.

It catalyses the reaction RNA(n) + a ribonucleoside 5'-triphosphate = RNA(n+1) + diphosphate. In terms of biological role, DNA-dependent RNA polymerase catalyzes the transcription of DNA into RNA using the four ribonucleoside triphosphates as substrates. This Buchnera aphidicola subsp. Cinara cedri (strain Cc) protein is DNA-directed RNA polymerase subunit alpha.